The chain runs to 1186 residues: Syntaxin-binding protein 5-like (1186 aa).

The residue at position 1 (M1) is an N-acetylmethionine. The tract at residues 15–40 is disordered; the sequence is ASSPGSGSSSGSNSGGGAGSGSVHPA. Over residues 16–26 the composition is skewed to low complexity; it reads SSPGSGSSSGS. WD repeat units lie at residues 74 to 107, 114 to 153, 158 to 194, 213 to 247, 253 to 285, 307 to 349, 357 to 391, 413 to 490, 518 to 629, and 643 to 705; these read TALAFDPVQKILAIGTRTGAIRILGRPGVDCYCQ, VLQLQFLINEGALVSASSDDTLHLWNLRQKRPAILHSLKF, ITYCHLPFQSKWLYVGTERGNTHIVNIESFILSGYVI, HLSDSPRDEGKLLIGYENGTVVFWDLKSKRAELRV, IHSIDWHHEGKQFMCSHSDGSLTLWNLKSPSRP, PILK…KAIT, IVEFLTLCETPYPNEFQEPYAVVVLLEKDLIVVDL, TCTA…YKLK, QMIY…ELVI, and TSLA…IADN. Phosphothreonine is present on T568. 3 positions are modified to phosphoserine: S574, S589, and S593. T596 carries the phosphothreonine modification. S599 carries the phosphoserine modification. Omega-N-methylarginine is present on R709. Residues 748 to 769 are compositionally biased toward polar residues; that stretch reads TSDHVNGHCTSPTSQSCSSGKR. The segment at 748–771 is disordered; the sequence is TSDHVNGHCTSPTSQSCSSGKRLS. Residues S763, S765, S766, S771, S772, S793, S800, S812, S820, S822, and S823 each carry the phosphoserine modification. 4 WD repeats span residues 832–889, 898–969, 974–1018, and 1032–1055; these read ITAL…SGTF, TFSC…QTCL, ITET…LDVN, and CFTNEGQALYLVSPTEIQRLTYSQ. T1093 bears the Phosphothreonine mark. The region spanning 1121–1181 is the v-SNARE coiled-coil homology domain; sequence SIEGMKGAAG…HELMLKYKDK (61 aa).

The protein belongs to the WD repeat L(2)GL family. In terms of assembly, interacts with STX1A and STX4. In terms of processing, phosphorylated, leading to STXBP5L increased turnover and subsequent de-repression of insulin secretion. Phosphorylated on serine residues in response to glucose or phorbol esters. Ubiquitinated by the E3 ligase SYVN1, leading to STXBP5L proteasomal degradation. As to expression, detected in kidney, hippocampus and lung carcinoma.

It is found in the cytoplasm. The protein resides in the cell membrane. It localises to the membrane. Its function is as follows. Plays a role in vesicle trafficking and exocytosis inhibition. In pancreatic beta-cells, inhibits insulin secretion probably by interacting with and regulating STX1A and STX4, key t-SNARE proteins involved in the fusion of insulin granules to the plasma membrane. Also plays a role in neurotransmitter release by inhibiting basal acetylcholine release from axon terminals and by preventing synaptic fatigue upon repetitive stimulation. Promotes as well axonal outgrowth. This Homo sapiens (Human) protein is Syntaxin-binding protein 5-like (STXBP5L).